Here is a 570-residue protein sequence, read N- to C-terminus: Glycine--tRNA ligase (570 aa).

Residues Arg99 and Glu165 each contribute to the substrate site. Residues 197–199 (RNE), 207–212 (LRLREF), 324–325 (EC), and 443–446 (GIDR) contribute to the ATP site. A substrate-binding site is contributed by 212–216 (FTQAE). 439-443 (EPSFG) contributes to the substrate binding site.

Belongs to the class-II aminoacyl-tRNA synthetase family.

The protein resides in the cytoplasm. The catalysed reaction is tRNA(Gly) + glycine + ATP = glycyl-tRNA(Gly) + AMP + diphosphate. Catalyzes the attachment of glycine to tRNA(Gly). This chain is Glycine--tRNA ligase, found in Thermococcus kodakarensis (strain ATCC BAA-918 / JCM 12380 / KOD1) (Pyrococcus kodakaraensis (strain KOD1)).